The primary structure comprises 775 residues: 5-methyltetrahydropteroyltriglutamate--homocysteine methyltransferase (775 aa).

Residues 16–19 (REMK) and Lys-115 contribute to the 5-methyltetrahydropteroyltri-L-glutamate site. L-homocysteine-binding positions include 435–437 (IGS) and Glu-488. L-methionine-binding positions include 435–437 (IGS) and Glu-488. 5-methyltetrahydropteroyltri-L-glutamate contacts are provided by residues 519-520 (RC) and Trp-565. An L-homocysteine-binding site is contributed by Asp-603. An L-methionine-binding site is contributed by Asp-603. Glu-609 contributes to the 5-methyltetrahydropteroyltri-L-glutamate binding site. Residues His-645, Cys-647, and Glu-669 each contribute to the Zn(2+) site. The Proton donor role is filled by His-698. Cys-730 provides a ligand contact to Zn(2+).

This sequence belongs to the vitamin-B12 independent methionine synthase family. Zn(2+) is required as a cofactor.

It catalyses the reaction 5-methyltetrahydropteroyltri-L-glutamate + L-homocysteine = tetrahydropteroyltri-L-glutamate + L-methionine. Its pathway is amino-acid biosynthesis; L-methionine biosynthesis via de novo pathway; L-methionine from L-homocysteine (MetE route): step 1/1. In terms of biological role, catalyzes the transfer of a methyl group from 5-methyltetrahydrofolate to homocysteine resulting in methionine formation. The polypeptide is 5-methyltetrahydropteroyltriglutamate--homocysteine methyltransferase (Coxiella burnetii (strain Dugway 5J108-111)).